We begin with the raw amino-acid sequence, 218 residues long: Glycoprotein UL1 (218 aa).

The N-terminal stretch at 1–27 (MGVQCNSKLLLLAVLITIILSSILVQA) is a signal peptide. The chain crosses the membrane as a helical span at residues 178 to 198 (VATHVGWTATVVIIICVLTYV).

The protein belongs to the RL11 family.

The protein localises to the virion membrane. This chain is Glycoprotein UL1 (UL1), found in Homo sapiens (Human).